A 320-amino-acid polypeptide reads, in one-letter code: GTP 3',8-cyclase (320 aa).

Residues 4–227 (LYSRRINYMR…METEKSSPAK (224 aa)) enclose the Radical SAM core domain. Arg13 lines the GTP pocket. [4Fe-4S] cluster is bound by residues Cys20 and Cys24. Tyr26 lines the S-adenosyl-L-methionine pocket. Residue Cys27 participates in [4Fe-4S] cluster binding. Arg63 is a GTP binding site. Gly67 is a binding site for S-adenosyl-L-methionine. Thr94 contributes to the GTP binding site. An S-adenosyl-L-methionine-binding site is contributed by Ser118. Lys155 contacts GTP. Met189 is an S-adenosyl-L-methionine binding site. Cys249 and Cys252 together coordinate [4Fe-4S] cluster. 254 to 256 (RVR) provides a ligand contact to GTP. Cys266 provides a ligand contact to [4Fe-4S] cluster. The segment covering 300-312 (KHDLLTDSHEESN) has biased composition (basic and acidic residues). A disordered region spans residues 300–320 (KHDLLTDSHEESNRGMSQIGG).

Belongs to the radical SAM superfamily. MoaA family. In terms of assembly, monomer and homodimer. [4Fe-4S] cluster is required as a cofactor.

The enzyme catalyses GTP + AH2 + S-adenosyl-L-methionine = (8S)-3',8-cyclo-7,8-dihydroguanosine 5'-triphosphate + 5'-deoxyadenosine + L-methionine + A + H(+). It functions in the pathway cofactor biosynthesis; molybdopterin biosynthesis. Catalyzes the cyclization of GTP to (8S)-3',8-cyclo-7,8-dihydroguanosine 5'-triphosphate. This is GTP 3',8-cyclase from Alkaliphilus oremlandii (strain OhILAs) (Clostridium oremlandii (strain OhILAs)).